The chain runs to 337 residues: Biotin synthase (337 aa).

In terms of domain architecture, Radical SAM core spans 39-267; sequence QEVQVCTLLS…KAMVRLSAGR (229 aa). [4Fe-4S] cluster-binding residues include Cys54, Cys58, and Cys61. [2Fe-2S] cluster contacts are provided by Cys98, Cys130, Cys190, and Arg262.

It belongs to the radical SAM superfamily. Biotin synthase family. Homodimer. [4Fe-4S] cluster is required as a cofactor. [2Fe-2S] cluster serves as cofactor.

It catalyses the reaction (4R,5S)-dethiobiotin + (sulfur carrier)-SH + 2 reduced [2Fe-2S]-[ferredoxin] + 2 S-adenosyl-L-methionine = (sulfur carrier)-H + biotin + 2 5'-deoxyadenosine + 2 L-methionine + 2 oxidized [2Fe-2S]-[ferredoxin]. The protein operates within cofactor biosynthesis; biotin biosynthesis; biotin from 7,8-diaminononanoate: step 2/2. Its function is as follows. Catalyzes the conversion of dethiobiotin (DTB) to biotin by the insertion of a sulfur atom into dethiobiotin via a radical-based mechanism. This is Biotin synthase from Cytophaga hutchinsonii (strain ATCC 33406 / DSM 1761 / CIP 103989 / NBRC 15051 / NCIMB 9469 / D465).